The chain runs to 312 residues: tRNA dimethylallyltransferase (312 aa).

Residue 12–19 coordinates ATP; sequence GPTAIGKS. 14 to 19 contributes to the substrate binding site; that stretch reads TAIGKS. Interaction with substrate tRNA stretches follow at residues 38 to 41 and 162 to 166; these read DSKL and QRVLR.

The protein belongs to the IPP transferase family. Monomer. It depends on Mg(2+) as a cofactor.

It carries out the reaction adenosine(37) in tRNA + dimethylallyl diphosphate = N(6)-dimethylallyladenosine(37) in tRNA + diphosphate. Functionally, catalyzes the transfer of a dimethylallyl group onto the adenine at position 37 in tRNAs that read codons beginning with uridine, leading to the formation of N6-(dimethylallyl)adenosine (i(6)A). This is tRNA dimethylallyltransferase from Buchnera aphidicola subsp. Cinara cedri (strain Cc).